We begin with the raw amino-acid sequence, 694 residues long: Elongation factor G (694 aa).

A tr-type G domain is found at 9–288 (DAIRNIGIMA…VIVKWLPSPL (280 aa)). GTP is bound by residues 18–25 (AHIDAGKT), 82–86 (DTPGH), and 136–139 (NKMD).

This sequence belongs to the TRAFAC class translation factor GTPase superfamily. Classic translation factor GTPase family. EF-G/EF-2 subfamily.

It localises to the cytoplasm. In terms of biological role, catalyzes the GTP-dependent ribosomal translocation step during translation elongation. During this step, the ribosome changes from the pre-translocational (PRE) to the post-translocational (POST) state as the newly formed A-site-bound peptidyl-tRNA and P-site-bound deacylated tRNA move to the P and E sites, respectively. Catalyzes the coordinated movement of the two tRNA molecules, the mRNA and conformational changes in the ribosome. The chain is Elongation factor G from Chlamydia trachomatis serovar A (strain ATCC VR-571B / DSM 19440 / HAR-13).